The chain runs to 216 residues: Probable nicotinate-nucleotide adenylyltransferase (216 aa).

It belongs to the NadD family.

The enzyme catalyses nicotinate beta-D-ribonucleotide + ATP + H(+) = deamido-NAD(+) + diphosphate. It participates in cofactor biosynthesis; NAD(+) biosynthesis; deamido-NAD(+) from nicotinate D-ribonucleotide: step 1/1. Its function is as follows. Catalyzes the reversible adenylation of nicotinate mononucleotide (NaMN) to nicotinic acid adenine dinucleotide (NaAD). This Geobacter sp. (strain M21) protein is Probable nicotinate-nucleotide adenylyltransferase.